The chain runs to 1049 residues: Bifunctional cytochrome P450/NADPH--P450 reductase (1049 aa).

The cytochrome P450 stretch occupies residues 2 to 472 (TIKEMPQPKT…STEQSAKKVR (471 aa)). Tyrosine 52 serves as a coordination point for (9Z)-hexadecenoate. Cysteine 401 is a heme binding site. An NADPH--P450 reductase region spans residues 473–1049 (KKAENAHNTP…GRYAKDVWAG (577 aa)). One can recognise a Flavodoxin-like domain in the interval 483 to 622 (LLVLYGSNMG…TYEEWREHMW (140 aa)). Residues 489-494 (SNMGTA), 536-539 (SYNG), 570-572 (CGD), and 578-580 (TYQ) contribute to the FMN site. The FAD-binding FR-type domain maps to 660–892 (HGAFSTNVVA…STPQSEFTLP (233 aa)).

This sequence in the N-terminal section; belongs to the cytochrome P450 family. FAD is required as a cofactor. FMN serves as cofactor. It depends on heme as a cofactor.

It is found in the cytoplasm. The catalysed reaction is 2 oxidized [cytochrome P450] + NADPH = 2 reduced [cytochrome P450] + NADP(+) + H(+). It carries out the reaction an organic molecule + reduced [NADPH--hemoprotein reductase] + O2 = an alcohol + oxidized [NADPH--hemoprotein reductase] + H2O + H(+). With respect to regulation, inhibited by N-(12-imidazolyl-dodecanoyl)-L-leucine. Its function is as follows. Functions as a fatty acid monooxygenase. Catalyzes hydroxylation of fatty acids at omega-1, omega-2 and omega-3 positions. Shows activity toward medium and long-chain fatty acids, with optimum chain lengths of 12, 14 and 16 carbons (lauric, myristic, and palmitic acids). Able to metabolize some of these primary metabolites to secondary and tertiary products. Marginal activity towards short chain lengths of 8-10 carbons. Hydroxylates highly branched fatty acids, which play an essential role in membrane fluidity regulation. Also displays a NADPH-dependent reductase activity in the C-terminal domain, which allows electron transfer from NADPH to the heme iron of the cytochrome P450 N-terminal domain. Involved in inactivation of quorum sensing signals of other competing bacteria by oxidazing efficiently acyl homoserine lactones (AHLs), molecules involved in quorum sensing signaling pathways, and their lactonolysis products acyl homoserines (AHs). This is Bifunctional cytochrome P450/NADPH--P450 reductase from Priestia megaterium (strain ATCC 14581 / DSM 32 / CCUG 1817 / JCM 2506 / NBRC 15308 / NCIMB 9376 / NCTC 10342 / NRRL B-14308 / VKM B-512 / Ford 19) (Bacillus megaterium).